Consider the following 333-residue polypeptide: Electron transfer flavoprotein subunit alpha, mitochondrial (333 aa).

Residues 1–19 (MFRAAAPGQLRRAASSLRF) constitute a mitochondrion transit peptide. Positions 20–204 (QSTLVIAEHA…EISEWLDQKL (185 aa)) are domain I. At Lys-59 the chain carries N6-acetyllysine; alternate. Residue Lys-59 is modified to N6-succinyllysine; alternate. Lys-62 carries the post-translational modification N6-acetyllysine. Position 69 is an N6-acetyllysine; alternate (Lys-69). The residue at position 69 (Lys-69) is an N6-succinyllysine; alternate. Lys-75 is subject to N6-acetyllysine. At Thr-93 the chain carries Phosphothreonine. An N6-acetyllysine mark is found at Lys-101 and Lys-139. Ser-140 bears the Phosphoserine mark. Residue Lys-158 is modified to N6-acetyllysine; alternate. Residue Lys-158 is modified to N6-succinyllysine; alternate. The residue at position 164 (Lys-164) is an N6-acetyllysine. Lys-187 bears the N6-succinyllysine mark. Lys-203 bears the N6-acetyllysine; alternate mark. Lys-203 is subject to N6-succinyllysine; alternate. A domain II region spans residues 205 to 333 (TKSDRPELTG…PEMTEILKKK (129 aa)). Lys-216 carries the N6-succinyllysine modification. Residue Arg-223 participates in FAD binding. N6-acetyllysine; alternate occurs at positions 226 and 232. An N6-succinyllysine; alternate mark is found at Lys-226 and Lys-232. FAD contacts are provided by residues Ser-248, 263–266 (VGQT), 281–286 (SGAIQH), and Asn-300. Lys-301 is subject to N6-succinyllysine. 318–319 (DL) is a binding site for FAD.

The protein belongs to the ETF alpha-subunit/FixB family. Heterodimer composed of ETFA and ETFB. Identified in a complex that contains ETFA, ETFB and ETFRF1. Interaction with ETFRF1 promotes dissociation of the bound FAD and loss of electron transfer activity. Interacts with TASOR. FAD is required as a cofactor.

The protein localises to the mitochondrion matrix. Heterodimeric electron transfer flavoprotein that accepts electrons from several mitochondrial dehydrogenases, including acyl-CoA dehydrogenases, glutaryl-CoA and sarcosine dehydrogenase. It transfers the electrons to the main mitochondrial respiratory chain via ETF-ubiquinone oxidoreductase (ETF dehydrogenase). Required for normal mitochondrial fatty acid oxidation and normal amino acid metabolism. The protein is Electron transfer flavoprotein subunit alpha, mitochondrial (ETFA) of Macaca fascicularis (Crab-eating macaque).